The primary structure comprises 218 residues: Small ribosomal subunit protein uS3 (218 aa).

The 69-residue stretch at 38 to 106 folds into the KH type-2 domain; it reads IREFISKRLS…RVHINILEIK (69 aa).

The protein belongs to the universal ribosomal protein uS3 family. As to quaternary structure, part of the 30S ribosomal subunit. Forms a tight complex with proteins S10 and S14.

Binds the lower part of the 30S subunit head. Binds mRNA in the 70S ribosome, positioning it for translation. This Bacillus velezensis (strain DSM 23117 / BGSC 10A6 / LMG 26770 / FZB42) (Bacillus amyloliquefaciens subsp. plantarum) protein is Small ribosomal subunit protein uS3.